The chain runs to 622 residues: Carbon monoxide dehydrogenase (622 aa).

Residues Cys-40, Cys-49, Cys-52, Cys-57, and Cys-68 each coordinate [4Fe-4S] cluster. [Ni-4Fe-5S] cluster is bound by residues His-256, Cys-334, Cys-442, Cys-473, and Cys-514.

The protein belongs to the Ni-containing carbon monoxide dehydrogenase family. As to quaternary structure, homodimer. Requires [4Fe-4S] cluster as cofactor. [Ni-4Fe-5S] cluster is required as a cofactor.

The catalysed reaction is CO + 2 oxidized [2Fe-2S]-[ferredoxin] + H2O = 2 reduced [2Fe-2S]-[ferredoxin] + CO2 + 2 H(+). Functionally, CODH oxidizes carbon monoxide coupled, via CooF, to the reduction of a hydrogen cation by a hydrogenase (possibly CooH). The polypeptide is Carbon monoxide dehydrogenase (cooS) (Archaeoglobus fulgidus (strain ATCC 49558 / DSM 4304 / JCM 9628 / NBRC 100126 / VC-16)).